The chain runs to 324 residues: Phospho-N-acetylmuramoyl-pentapeptide-transferase (324 aa).

10 consecutive transmembrane segments (helical) span residues glycine 5–isoleucine 25, proline 52–isoleucine 72, leucine 77–leucine 97, valine 122–isoleucine 142, phenylalanine 149–alanine 169, leucine 176–valine 196, phenylalanine 201–asparagine 221, valine 227–leucine 247, leucine 253–isoleucine 273, and valine 302–valine 322.

The protein belongs to the glycosyltransferase 4 family. MraY subfamily. It depends on Mg(2+) as a cofactor.

The protein resides in the cell membrane. It catalyses the reaction UDP-N-acetyl-alpha-D-muramoyl-L-alanyl-gamma-D-glutamyl-meso-2,6-diaminopimeloyl-D-alanyl-D-alanine + di-trans,octa-cis-undecaprenyl phosphate = di-trans,octa-cis-undecaprenyl diphospho-N-acetyl-alpha-D-muramoyl-L-alanyl-D-glutamyl-meso-2,6-diaminopimeloyl-D-alanyl-D-alanine + UMP. The protein operates within cell wall biogenesis; peptidoglycan biosynthesis. Functionally, catalyzes the initial step of the lipid cycle reactions in the biosynthesis of the cell wall peptidoglycan: transfers peptidoglycan precursor phospho-MurNAc-pentapeptide from UDP-MurNAc-pentapeptide onto the lipid carrier undecaprenyl phosphate, yielding undecaprenyl-pyrophosphoryl-MurNAc-pentapeptide, known as lipid I. This Bacillus mycoides (strain KBAB4) (Bacillus weihenstephanensis) protein is Phospho-N-acetylmuramoyl-pentapeptide-transferase.